We begin with the raw amino-acid sequence, 569 residues long: MRTSQYLLSTLKETPANAEVISHQLMLRAGLVRNLASGLYTWLPTGLRVLKKVEQIVREEMQRAGGNEILMPMVQPADLWQESGRLDDYGPELLRINDRHKRPFVLGPTHEEVVTKLVANELSSYKQLPLNVFQIQSKFRDEIRPRFGVMRGREFLMKDAYSFHLEDECLEKTYQIMFDAYCRIFERLELNFRPVLADTGSIGGEKSHEFHVLADSGEDDIAFSDASDFAANIEKAEALAPAGERAEPTQTLTKVATPNVKSMDDLVQCLSVDLKTTVKTLLVVGATVEGEAETVVALVLRGDHQLNEIKAEHLPQVATPITFASEEQILAAANCNAGSIGPVGLNIEVIVDRSAAHLSDFVCGANEDDAHLTGVNWQRDCNEISVHDIRNVVAGDPSPCGQGNIEIKRGIEVGHIFQLGRKYAEAMNCAVLNEGGKNQTLTMGCYGIGVSRIVAAAIEQNHDKYGIKWPKAIAPFQVAIVPMNMAKSARVKETAEALYESLNQAGIEVLFDDRKERPGVMFADHELMGTPLLLIIGERNLDAQQIELKNRITGEKSLIAIDEVMSLFN.

Belongs to the class-II aminoacyl-tRNA synthetase family. ProS type 1 subfamily. As to quaternary structure, homodimer.

The protein localises to the cytoplasm. The catalysed reaction is tRNA(Pro) + L-proline + ATP = L-prolyl-tRNA(Pro) + AMP + diphosphate. In terms of biological role, catalyzes the attachment of proline to tRNA(Pro) in a two-step reaction: proline is first activated by ATP to form Pro-AMP and then transferred to the acceptor end of tRNA(Pro). As ProRS can inadvertently accommodate and process non-cognate amino acids such as alanine and cysteine, to avoid such errors it has two additional distinct editing activities against alanine. One activity is designated as 'pretransfer' editing and involves the tRNA(Pro)-independent hydrolysis of activated Ala-AMP. The other activity is designated 'posttransfer' editing and involves deacylation of mischarged Ala-tRNA(Pro). The misacylated Cys-tRNA(Pro) is not edited by ProRS. The sequence is that of Proline--tRNA ligase from Colwellia psychrerythraea (strain 34H / ATCC BAA-681) (Vibrio psychroerythus).